We begin with the raw amino-acid sequence, 128 residues long: Small ribosomal subunit protein eS8 (128 aa).

The disordered stretch occupies residues 1 to 41 (MSYYQGNDSRKITGGQKGKNRDKRKYELGSPPTETKISDKD).

This sequence belongs to the eukaryotic ribosomal protein eS8 family. As to quaternary structure, part of the 30S ribosomal subunit.

This Sulfolobus acidocaldarius (strain ATCC 33909 / DSM 639 / JCM 8929 / NBRC 15157 / NCIMB 11770) protein is Small ribosomal subunit protein eS8.